Reading from the N-terminus, the 196-residue chain is ATP-dependent Clp protease proteolytic subunit (196 aa).

Ser-99 serves as the catalytic Nucleophile. The active site involves His-124.

Belongs to the peptidase S14 family. As to quaternary structure, fourteen ClpP subunits assemble into 2 heptameric rings which stack back to back to give a disk-like structure with a central cavity, resembling the structure of eukaryotic proteasomes.

The protein localises to the cytoplasm. The catalysed reaction is Hydrolysis of proteins to small peptides in the presence of ATP and magnesium. alpha-casein is the usual test substrate. In the absence of ATP, only oligopeptides shorter than five residues are hydrolyzed (such as succinyl-Leu-Tyr-|-NHMec, and Leu-Tyr-Leu-|-Tyr-Trp, in which cleavage of the -Tyr-|-Leu- and -Tyr-|-Trp bonds also occurs).. Functionally, cleaves peptides in various proteins in a process that requires ATP hydrolysis. Has a chymotrypsin-like activity. Plays a major role in the degradation of misfolded proteins. This Nitratiruptor sp. (strain SB155-2) protein is ATP-dependent Clp protease proteolytic subunit.